A 471-amino-acid chain; its full sequence is V-type ATP synthase beta chain (471 aa).

The protein belongs to the ATPase alpha/beta chains family.

Functionally, produces ATP from ADP in the presence of a proton gradient across the membrane. The V-type beta chain is a regulatory subunit. This chain is V-type ATP synthase beta chain, found in Streptococcus pyogenes serotype M28 (strain MGAS6180).